We begin with the raw amino-acid sequence, 820 residues long: MLAAMGLELVFSLLLLWTQGTQGSTLDPAGQHVCKGSSPSELQCCPGWRQKDQECTIPICEGPDACRKEEVCVKPGLCRCKPGFFGAQCSSRCPGQYWGHDCRETCPCHPRGQCEPATGDCQCQPNYWGRLCEFPCTCGPHGQCDPKTGLCHCDPGWWSPTCRRPCQCNPASRCDQATGTCVCPPGWWGRRCSFSCNCHTSPCMQDSGRCVCLPGWWGPECSRKCQCVRGQCSVTSGHCSCPPGFHGIRCELPCNPGHYGAQCKESCGHCELNATCSPVTGNCESCKPGWNGTQCKQPCPAGTFGERCTGQCPRCRLGEPCQAETGHCQHCDPGWLGHRCENPCPLGTFGKGCSSTCPACAQGTCDAVTGECVCSAGYWGTSCNSSCPAGFHGNNCSMPCQCPEGLCHPVSGTCQLGRHGKNALIVGILVPLLLLLMGIVCCAYCCSGTRLDPKDRPERNGAAFFRMKQQVWGALTNLGSALPCGSLSNYKLPWVTVSHHDPEVPFNHSFIEPPSAGWASDDSFSSDPDSGEEDEAHAYFVPPREEMVPMAQEESPEASLPGGSFPPPEDASTPFPIPRTSSLARAKRPSVSFAEGTKFAPQNGRSSGDLSSPIRKPKRLSRGAQPRPEGQEAEESTGPEQVNTEEDAPTATSSGDPATSHGQLPPGSQMVAECAETTDGGIQESSGSVATIYMLAGTPQKPEGPVWSVFRRLGNYQKDQMDPKVKSAIPKPLRRSLGRNQASAGSAPGAVLSQAMESTAVRPEETPRGLGDGIESSGTVQEPDAGGSSLEQDSQKQAEEKEQEEPLYENVVPMSVPPQH.

Residues 1–23 (MLAAMGLELVFSLLLLWTQGTQG) form the signal peptide. Topologically, residues 24 to 422 (STLDPAGQHV…TCQLGRHGKN (399 aa)) are extracellular. 4 EGF-like domains span residues 56–90 (TIPI…AQCS), 98–133 (WGHD…RLCE), 163–193 (RRPC…RRCS), and 217–251 (WGPE…IRCE). Disulfide bonds link Cys-60-Cys-72, Cys-66-Cys-78, Cys-80-Cys-89, Cys-102-Cys-114, Cys-108-Cys-121, Cys-123-Cys-132, Cys-166-Cys-174, Cys-168-Cys-181, Cys-183-Cys-192, Cys-221-Cys-232, Cys-225-Cys-239, and Cys-241-Cys-250. Asn-291 carries N-linked (GlcNAc...) asparagine glycosylation. 2 consecutive EGF-like domains span residues 304–341 (FGER…HRCE) and 353–384 (CSST…TSCN). Residues 423–443 (ALIVGILVPLLLLLMGIVCCA) form a helical membrane-spanning segment. The Cytoplasmic segment spans residues 444-820 (YCCSGTRLDP…VVPMSVPPQH (377 aa)). Disordered regions lie at residues 549–685 (PMAQ…IQES) and 715–820 (NYQK…PPQH). A phosphoserine mark is found at Ser-590 and Ser-607. The span at 631–648 (QEAEESTGPEQVNTEEDA) shows a compositional bias: acidic residues. Residues 650-662 (TATSSGDPATSHG) show a composition bias toward polar residues.

As to quaternary structure, heterophilic interaction with SREC2 via its extracellular domain. The heterophilic interaction is suppressed by the presence of ligand such as Ac-LDL. Interacts with AVIL; the interaction occurs in embryonic dorsal root ganglions at 18 dpc and induces neurite-like outgrowth. Expressed weakly in brain, spinal cord and dorsal root ganglions.

It is found in the membrane. Mediates the binding and degradation of acetylated low density lipoprotein (Ac-LDL). Mediates heterophilic interactions, suggesting a function as adhesion protein. Plays a role in the regulation of neurite-like outgrowth. The sequence is that of Scavenger receptor class F member 1 (Scarf1) from Mus musculus (Mouse).